We begin with the raw amino-acid sequence, 117 residues long: Large ribosomal subunit protein uL18 (117 aa).

This sequence belongs to the universal ribosomal protein uL18 family. In terms of assembly, part of the 50S ribosomal subunit; part of the 5S rRNA/L5/L18/L25 subcomplex. Contacts the 5S and 23S rRNAs.

This is one of the proteins that bind and probably mediate the attachment of the 5S RNA into the large ribosomal subunit, where it forms part of the central protuberance. In Thiobacillus denitrificans (strain ATCC 25259 / T1), this protein is Large ribosomal subunit protein uL18.